The primary structure comprises 352 residues: 4-hydroxy-3-methylbut-2-en-1-yl diphosphate synthase (flavodoxin) (352 aa).

[4Fe-4S] cluster-binding residues include C262, C265, C297, and E304.

Belongs to the IspG family. It depends on [4Fe-4S] cluster as a cofactor.

It catalyses the reaction (2E)-4-hydroxy-3-methylbut-2-enyl diphosphate + oxidized [flavodoxin] + H2O + 2 H(+) = 2-C-methyl-D-erythritol 2,4-cyclic diphosphate + reduced [flavodoxin]. It functions in the pathway isoprenoid biosynthesis; isopentenyl diphosphate biosynthesis via DXP pathway; isopentenyl diphosphate from 1-deoxy-D-xylulose 5-phosphate: step 5/6. In terms of biological role, converts 2C-methyl-D-erythritol 2,4-cyclodiphosphate (ME-2,4cPP) into 1-hydroxy-2-methyl-2-(E)-butenyl 4-diphosphate. The polypeptide is 4-hydroxy-3-methylbut-2-en-1-yl diphosphate synthase (flavodoxin) (Nitratiruptor sp. (strain SB155-2)).